We begin with the raw amino-acid sequence, 56 residues long: Small ribosomal subunit protein uS14 (56 aa).

Zn(2+)-binding residues include C21, C24, C39, and C42.

The protein belongs to the universal ribosomal protein uS14 family. Component of the 40S small ribosomal subunit. Zn(2+) serves as cofactor.

The protein localises to the cytoplasm. It is found in the cytosol. It localises to the rough endoplasmic reticulum. The sequence is that of Small ribosomal subunit protein uS14 (RpS29) from Culex quinquefasciatus (Southern house mosquito).